We begin with the raw amino-acid sequence, 235 residues long: Purine nucleoside phosphorylase DeoD-type (235 aa).

Position 4 (H4) interacts with a purine D-ribonucleoside. Phosphate contacts are provided by residues G20, R24, R43, and R87–T90. A purine D-ribonucleoside-binding positions include E180 to E182 and S204 to D205. D205 acts as the Proton donor in catalysis.

It belongs to the PNP/UDP phosphorylase family. Homohexamer; trimer of homodimers.

The catalysed reaction is a purine D-ribonucleoside + phosphate = a purine nucleobase + alpha-D-ribose 1-phosphate. It catalyses the reaction a purine 2'-deoxy-D-ribonucleoside + phosphate = a purine nucleobase + 2-deoxy-alpha-D-ribose 1-phosphate. In terms of biological role, catalyzes the reversible phosphorolytic breakdown of the N-glycosidic bond in the beta-(deoxy)ribonucleoside molecules, with the formation of the corresponding free purine bases and pentose-1-phosphate. This is Purine nucleoside phosphorylase DeoD-type from Oceanobacillus iheyensis (strain DSM 14371 / CIP 107618 / JCM 11309 / KCTC 3954 / HTE831).